The following is a 500-amino-acid chain: Glycerol-3-phosphate acyltransferase 7 (500 aa).

2 helical membrane passes run 38–58 and 235–255; these read GLIR…LDVL and ALII…RIFV. Residues 298-303 carry the HXXXXD motif motif; that stretch reads HRTLMD.

This sequence belongs to the GPAT/DAPAT family. In terms of tissue distribution, weakly or not expressed in roots, leaves, seedlings, developing siliques and flower buds.

The protein localises to the membrane. It carries out the reaction sn-glycerol 3-phosphate + an acyl-CoA = a 1-acyl-sn-glycero-3-phosphate + CoA. The protein operates within phospholipid metabolism; CDP-diacylglycerol biosynthesis; CDP-diacylglycerol from sn-glycerol 3-phosphate: step 1/3. Functionally, esterifies acyl-group from acyl-ACP to the sn-1 position of glycerol-3-phosphate, an essential step in glycerolipid biosynthesis. This is Glycerol-3-phosphate acyltransferase 7 (GPAT7) from Arabidopsis thaliana (Mouse-ear cress).